A 130-amino-acid chain; its full sequence is Flagellar assembly factor FliW (130 aa).

It belongs to the FliW family. Interacts with translational regulator CsrA and flagellin(s).

It is found in the cytoplasm. Functionally, acts as an anti-CsrA protein, binds CsrA and prevents it from repressing translation of its target genes, one of which is flagellin. Binds to flagellin and participates in the assembly of the flagellum. The polypeptide is Flagellar assembly factor FliW (Borrelia hermsii (strain HS1 / DAH)).